The following is a 502-amino-acid chain: Interleukin-17 receptor B (502 aa).

Positions 1 to 17 (MSLVLLSLAALCRSAVP) are cleaved as a signal peptide. Residues 18–292 (REPTVQCGSE…NKSKPGGWLP (275 aa)) lie on the Extracellular side of the membrane. Asparagine 67, asparagine 103, asparagine 156, asparagine 183, asparagine 197, and asparagine 283 each carry an N-linked (GlcNAc...) asparagine glycan. Residues 293-313 (LLLLSLLVATWVLVAGIYLMW) traverse the membrane as a helical segment. Residues 314 to 502 (RHERIKKTSF…QACHDGCCSL (189 aa)) lie on the Cytoplasmic side of the membrane. The region spanning 331-477 (PIKVLVVYPS…LMKDATAFCA (147 aa)) is the SEFIR domain.

As to quaternary structure, interacts with DAZAP2. Interacts with TRAF3IP2. In terms of tissue distribution, expressed in several endocrine tissues, mostly in fetal and adult liver, kidney, pancreas, testis, colon, brain and small intestine; not detected in peripheral blood leukocytes, lymphoid organs, and most cell lines.

It localises to the cell membrane. The protein resides in the secreted. Its function is as follows. Receptor for the pro-inflammatory cytokines IL17B and IL17E. May play a role in controlling the growth and/or differentiation of hematopoietic cells. The protein is Interleukin-17 receptor B (IL17RB) of Homo sapiens (Human).